We begin with the raw amino-acid sequence, 261 residues long: Adenosylcobinamide-GDP ribazoletransferase (261 aa).

The next 5 helical transmembrane spans lie at 31–51, 59–79, 125–145, 183–203, and 240–260; these read YAIC…FLTF, LGDI…SGGI, FGMV…FFVV, VIYL…LTVV, and LMAG…TGHW.

The protein belongs to the CobS family. Requires Mg(2+) as cofactor.

Its subcellular location is the cell membrane. The enzyme catalyses alpha-ribazole + adenosylcob(III)inamide-GDP = adenosylcob(III)alamin + GMP + H(+). It catalyses the reaction alpha-ribazole 5'-phosphate + adenosylcob(III)inamide-GDP = adenosylcob(III)alamin 5'-phosphate + GMP + H(+). It functions in the pathway cofactor biosynthesis; adenosylcobalamin biosynthesis; adenosylcobalamin from cob(II)yrinate a,c-diamide: step 7/7. Joins adenosylcobinamide-GDP and alpha-ribazole to generate adenosylcobalamin (Ado-cobalamin). Also synthesizes adenosylcobalamin 5'-phosphate from adenosylcobinamide-GDP and alpha-ribazole 5'-phosphate. This is Adenosylcobinamide-GDP ribazoletransferase from Lachnoclostridium phytofermentans (strain ATCC 700394 / DSM 18823 / ISDg) (Clostridium phytofermentans).